Reading from the N-terminus, the 246-residue chain is Probable transcriptional regulatory protein AHA_1522 (246 aa).

Belongs to the TACO1 family.

The protein localises to the cytoplasm. The chain is Probable transcriptional regulatory protein AHA_1522 from Aeromonas hydrophila subsp. hydrophila (strain ATCC 7966 / DSM 30187 / BCRC 13018 / CCUG 14551 / JCM 1027 / KCTC 2358 / NCIMB 9240 / NCTC 8049).